The following is a 575-amino-acid chain: Arginine--tRNA ligase (575 aa).

Positions 122–132 (PNVAKEMHVGH) match the 'HIGH' region motif.

The protein belongs to the class-I aminoacyl-tRNA synthetase family. Monomer.

The protein resides in the cytoplasm. It catalyses the reaction tRNA(Arg) + L-arginine + ATP = L-arginyl-tRNA(Arg) + AMP + diphosphate. This chain is Arginine--tRNA ligase, found in Actinobacillus succinogenes (strain ATCC 55618 / DSM 22257 / CCUG 43843 / 130Z).